The primary structure comprises 209 residues: Uracil phosphoribosyltransferase (209 aa).

5-phospho-alpha-D-ribose 1-diphosphate-binding positions include R79, R104, and 131 to 139 (DPMLATGGS). Residues I194 and 199–201 (GDA) contribute to the uracil site. D200 is a binding site for 5-phospho-alpha-D-ribose 1-diphosphate.

The protein belongs to the UPRTase family. Requires Mg(2+) as cofactor.

The enzyme catalyses UMP + diphosphate = 5-phospho-alpha-D-ribose 1-diphosphate + uracil. It functions in the pathway pyrimidine metabolism; UMP biosynthesis via salvage pathway; UMP from uracil: step 1/1. Allosterically activated by GTP. Functionally, catalyzes the conversion of uracil and 5-phospho-alpha-D-ribose 1-diphosphate (PRPP) to UMP and diphosphate. In Exiguobacterium sp. (strain ATCC BAA-1283 / AT1b), this protein is Uracil phosphoribosyltransferase.